The primary structure comprises 102 residues: Putative RNA-binding protein RbpA (102 aa).

Positions 2–79 (SIYVGNLSYE…RDLKVNKAKP (78 aa)) constitute an RRM domain. Residues 73–84 (KVNKAKPREDRG) show a composition bias toward basic and acidic residues. The interval 73–102 (KVNKAKPREDRGPSGGNRGGYGGGGGRNRY) is disordered. The segment covering 85-102 (PSGGNRGGYGGGGGRNRY) has biased composition (gly residues).

The sequence is that of Putative RNA-binding protein RbpA (rbpA) from Nostoc sp. (strain PCC 7120 / SAG 25.82 / UTEX 2576).